The sequence spans 631 residues: Dolichyl-diphosphooligosaccharide--protein glycosyltransferase subunit 2 (631 aa).

The first 22 residues, 1 to 22 (MAPPGSSTVFLLALTIIASTWA), serve as a signal peptide directing secretion. Over 23–540 (LTPTHYLTKH…REPEKRPPTV (518 aa)) the chain is Lumenal. N-linked (GlcNAc...) asparagine glycosylation is present at Asn106. Lys154 participates in a covalent cross-link: Glycyl lysine isopeptide (Lys-Gly) (interchain with G-Cter in ubiquitin). A helical membrane pass occupies residues 541 to 561 (VSNTFTALILSPLLLLFALWI). The Cytoplasmic portion of the chain corresponds to 562–571 (RIGANVSNFT). A helical membrane pass occupies residues 572–592 (FAPSTIIFHLGHAAMLGLMYV). The Lumenal segment spans residues 593 to 596 (YWTQ). The helical transmembrane segment at 597 to 617 (LNMFQTLKYLAILGSVTFLAG) threads the bilayer. At 618 to 631 (NRMLAQQAVKRTAH) the chain is on the cytoplasmic side.

Belongs to the SWP1 family. As to quaternary structure, component of the oligosaccharyltransferase (OST) complex. OST exists in two different complex forms which contain common core subunits RPN1, RPN2, OST48, OST4, DAD1 and TMEM258, either STT3A or STT3B as catalytic subunits, and form-specific accessory subunits. STT3A complex assembly occurs through the formation of 3 subcomplexes. Subcomplex 1 contains RPN1 and TMEM258, subcomplex 2 contains the STT3A-specific subunits STT3A, DC2/OSTC, and KCP2 as well as the core subunit OST4, and subcomplex 3 contains RPN2, DAD1, and OST48. The STT3A complex can form stable complexes with the Sec61 complex or with both the Sec61 and TRAP complexes. Interacts with DDI2. Interacts with TMEM35A/NACHO. Expressed in all tissues tested.

The protein resides in the endoplasmic reticulum. It localises to the endoplasmic reticulum membrane. The protein operates within protein modification; protein glycosylation. Subunit of the oligosaccharyl transferase (OST) complex that catalyzes the initial transfer of a defined glycan (Glc(3)Man(9)GlcNAc(2) in eukaryotes) from the lipid carrier dolichol-pyrophosphate to an asparagine residue within an Asn-X-Ser/Thr consensus motif in nascent polypeptide chains, the first step in protein N-glycosylation. N-glycosylation occurs cotranslationally and the complex associates with the Sec61 complex at the channel-forming translocon complex that mediates protein translocation across the endoplasmic reticulum (ER). All subunits are required for a maximal enzyme activity. The polypeptide is Dolichyl-diphosphooligosaccharide--protein glycosyltransferase subunit 2 (Homo sapiens (Human)).